We begin with the raw amino-acid sequence, 313 residues long: N-acetyl-gamma-glutamyl-phosphate reductase (313 aa).

The active site involves Cys-117.

Belongs to the NAGSA dehydrogenase family. Type 2 subfamily.

It localises to the cytoplasm. It carries out the reaction N-acetyl-L-glutamate 5-semialdehyde + phosphate + NADP(+) = N-acetyl-L-glutamyl 5-phosphate + NADPH + H(+). It functions in the pathway amino-acid biosynthesis; L-arginine biosynthesis; N(2)-acetyl-L-ornithine from L-glutamate: step 3/4. Functionally, catalyzes the NADPH-dependent reduction of N-acetyl-5-glutamyl phosphate to yield N-acetyl-L-glutamate 5-semialdehyde. The protein is N-acetyl-gamma-glutamyl-phosphate reductase of Burkholderia orbicola (strain MC0-3).